The chain runs to 506 residues: Maturase K (506 aa).

Belongs to the intron maturase 2 family. MatK subfamily.

Its subcellular location is the plastid. The protein localises to the chloroplast. Usually encoded in the trnK tRNA gene intron. Probably assists in splicing its own and other chloroplast group II introns. The sequence is that of Maturase K from Hydrangea macrophylla (Bigleaf hydrangea).